Reading from the N-terminus, the 273-residue chain is Large ribosomal subunit protein uL2 (273 aa).

Disordered stretches follow at residues 34–54 and 223–273; these read LEKK…TRHI and VAMN…RRRK.

It belongs to the universal ribosomal protein uL2 family. As to quaternary structure, part of the 50S ribosomal subunit. Forms a bridge to the 30S subunit in the 70S ribosome.

Its function is as follows. One of the primary rRNA binding proteins. Required for association of the 30S and 50S subunits to form the 70S ribosome, for tRNA binding and peptide bond formation. It has been suggested to have peptidyltransferase activity; this is somewhat controversial. Makes several contacts with the 16S rRNA in the 70S ribosome. In Pseudomonas aeruginosa (strain LESB58), this protein is Large ribosomal subunit protein uL2.